The sequence spans 178 residues: Ribosome maturation factor RimM (178 aa).

The PRC barrel domain occupies 101–178 (ADEYYWYQLV…VMRVEWDADF (78 aa)).

Belongs to the RimM family. Binds ribosomal protein uS19.

The protein localises to the cytoplasm. An accessory protein needed during the final step in the assembly of 30S ribosomal subunit, possibly for assembly of the head region. Essential for efficient processing of 16S rRNA. May be needed both before and after RbfA during the maturation of 16S rRNA. It has affinity for free ribosomal 30S subunits but not for 70S ribosomes. This is Ribosome maturation factor RimM from Pseudomonas putida (strain ATCC 700007 / DSM 6899 / JCM 31910 / BCRC 17059 / LMG 24140 / F1).